A 511-amino-acid polypeptide reads, in one-letter code: MVLKKFLKEIQSILPGISAKLTWTSEEGSYSQDMTGVTPFQMIFEVDEKPRTLMTDCLVIKHFLRKIIMVHPKVRFHFSVKVNGILSTEIFGVENEPTLNLGNGIALLVDSQHYVSRPNFGTIESHCSRIHPVLGHPVMLFIPEDVAGMDLLGELILTPAAALCPSPKVSSNQLNRISSVSIFLYGPLGLPLILSTWEQPMTTFFKDTSSLVDWKKYHLCMIPNLDLNLDRDLVLPDVSYQVESSEEDQSQTMDPQGQTLLLFLFVDFHSAFPVQQMEIWGVYTLLTTHLNAILVESHSVVQGSIQFTVDKVLEQHHQAAKAQQKLQASLSVAVNSIMSILTGSTRSSFRKMCLQTLQAADTQEFRTKLHKVFREITQHQFLHHCSCEVKQLTLEKKDSAQGTEDAPDNSSLELLADTSGQAENKRLKRGSPRIEEMRALRSARAPSPSEAAPRRPEATAAPLTPRGREHREAHGRALAPGRASLGSRLEDVLWLQEVSNLSEWLSPSPGP.

The segment at 398 to 485 (DSAQGTEDAP…RALAPGRASL (88 aa)) is disordered. The span at 408–422 (DNSSLELLADTSGQA) shows a compositional bias: polar residues. Residues 440–451 (LRSARAPSPSEA) show a composition bias toward low complexity. Positions 466 to 475 (RGREHREAHG) are enriched in basic and acidic residues.

It belongs to the TOP6B-like family. In terms of assembly, heterotetramer of SPO11 and 2 TOP6BL chains. Interacts with SPO11. Detected in lung, spleen,colon and in skeletal muscle. Expressed in the ovaries, Fallopian tubes and uterus.

It is found in the chromosome. Functionally, component of a topoisomerase 6 complex specifically required for meiotic recombination. Together with SPO11, mediates DNA cleavage that forms the double-strand breaks (DSB) that initiate meiotic recombination. The complex promotes relaxation of negative and positive supercoiled DNA and DNA decatenation through cleavage and ligation cycles. The sequence is that of Type 2 DNA topoisomerase 6 subunit B-like from Homo sapiens (Human).